The following is a 179-amino-acid chain: ATP synthase subunit delta (179 aa).

The protein belongs to the ATPase delta chain family. As to quaternary structure, F-type ATPases have 2 components, F(1) - the catalytic core - and F(0) - the membrane proton channel. F(1) has five subunits: alpha(3), beta(3), gamma(1), delta(1), epsilon(1). F(0) has three main subunits: a(1), b(2) and c(10-14). The alpha and beta chains form an alternating ring which encloses part of the gamma chain. F(1) is attached to F(0) by a central stalk formed by the gamma and epsilon chains, while a peripheral stalk is formed by the delta and b chains.

The protein resides in the cell membrane. F(1)F(0) ATP synthase produces ATP from ADP in the presence of a proton or sodium gradient. F-type ATPases consist of two structural domains, F(1) containing the extramembraneous catalytic core and F(0) containing the membrane proton channel, linked together by a central stalk and a peripheral stalk. During catalysis, ATP synthesis in the catalytic domain of F(1) is coupled via a rotary mechanism of the central stalk subunits to proton translocation. Its function is as follows. This protein is part of the stalk that links CF(0) to CF(1). It either transmits conformational changes from CF(0) to CF(1) or is implicated in proton conduction. The sequence is that of ATP synthase subunit delta from Listeria monocytogenes serovar 1/2a (strain ATCC BAA-679 / EGD-e).